A 476-amino-acid polypeptide reads, in one-letter code: Adenosylhomocysteinase (476 aa).

Substrate-binding residues include T67, D142, and E202. 203 to 205 lines the NAD(+) pocket; that stretch reads TTT. The substrate site is built by K232 and D236. NAD(+)-binding positions include N237, 266-271, E289, N324, 345-347, and N390; these read GYGDVG and IGH.

It belongs to the adenosylhomocysteinase family. NAD(+) serves as cofactor.

It localises to the cytoplasm. The catalysed reaction is S-adenosyl-L-homocysteine + H2O = L-homocysteine + adenosine. Its pathway is amino-acid biosynthesis; L-homocysteine biosynthesis; L-homocysteine from S-adenosyl-L-homocysteine: step 1/1. Its function is as follows. May play a key role in the regulation of the intracellular concentration of adenosylhomocysteine. The sequence is that of Adenosylhomocysteinase from Prochlorococcus marinus (strain SARG / CCMP1375 / SS120).